A 287-amino-acid polypeptide reads, in one-letter code: Shikimate dehydrogenase (NADP(+)) (287 aa).

Shikimate-binding positions include 21–23 (SKS) and T68. The active-site Proton acceptor is K72. The shikimate site is built by N93 and D109. NADP(+)-binding positions include 133 to 137 (GAGGA), 157 to 162 (NRTQTK), and M226. Residue Y228 participates in shikimate binding. Residue G250 coordinates NADP(+).

It belongs to the shikimate dehydrogenase family. As to quaternary structure, homodimer.

It catalyses the reaction shikimate + NADP(+) = 3-dehydroshikimate + NADPH + H(+). It participates in metabolic intermediate biosynthesis; chorismate biosynthesis; chorismate from D-erythrose 4-phosphate and phosphoenolpyruvate: step 4/7. In terms of biological role, involved in the biosynthesis of the chorismate, which leads to the biosynthesis of aromatic amino acids. Catalyzes the reversible NADPH linked reduction of 3-dehydroshikimate (DHSA) to yield shikimate (SA). The protein is Shikimate dehydrogenase (NADP(+)) of Shewanella oneidensis (strain ATCC 700550 / JCM 31522 / CIP 106686 / LMG 19005 / NCIMB 14063 / MR-1).